Consider the following 208-residue polypeptide: Small ribosomal subunit protein uS4 (208 aa).

The tract at residues 30 to 49 (KSALEKRPYPPGQHGQRRSK) is disordered. Positions 98 to 161 (RRLDNVVYRM…KNNPQIQRSL (64 aa)) constitute an S4 RNA-binding domain.

The protein belongs to the universal ribosomal protein uS4 family. As to quaternary structure, part of the 30S ribosomal subunit. Contacts protein S5. The interaction surface between S4 and S5 is involved in control of translational fidelity.

One of the primary rRNA binding proteins, it binds directly to 16S rRNA where it nucleates assembly of the body of the 30S subunit. Functionally, with S5 and S12 plays an important role in translational accuracy. The protein is Small ribosomal subunit protein uS4 of Nitratiruptor sp. (strain SB155-2).